The chain runs to 252 residues: Trans-aconitate 2-methyltransferase (252 aa).

This sequence belongs to the methyltransferase superfamily. Tam family.

The protein localises to the cytoplasm. The catalysed reaction is trans-aconitate + S-adenosyl-L-methionine = (E)-3-(methoxycarbonyl)pent-2-enedioate + S-adenosyl-L-homocysteine. In terms of biological role, catalyzes the S-adenosylmethionine monomethyl esterification of trans-aconitate. The protein is Trans-aconitate 2-methyltransferase of Enterobacter sp. (strain 638).